Here is a 593-residue protein sequence, read N- to C-terminus: Early nodule-specific protein 2 (593 aa).

Residues 71-110 (EKPPIYEPPPTEEPPPVYKPPIIHPPPNYKPPAHTPPIYH) show a composition bias toward pro residues. Residues 71-593 (EKPPIYEPPP…GHYPPYKKNQ (523 aa)) form a disordered region. 2 stretches are compositionally biased toward basic and acidic residues: residues 123-138 (PYEK…EYQP) and 166-195 (PPYE…EKPP). The span at 196–210 (PEYTPPYEKPPPEYQ) shows a compositional bias: pro residues. 2 stretches are compositionally biased toward basic and acidic residues: residues 227–265 (PPHE…EKPP) and 275–292 (PPHE…EKPP). Residues 294 to 306 (VHPPPEYQPPYLK) are compositionally biased toward pro residues. Basic and acidic residues-rich tracts occupy residues 339–350 (PPHEKPPHEHPP), 360–372 (PPPE…ENPP), 382–394 (PPHE…EHPP), and 404–421 (PPPE…EHPP). Over residues 422–435 (PEYQPPQENPPPEY) the composition is skewed to pro residues. A compositionally biased stretch (basic and acidic residues) spans 506–522 (PRHEKPMPKYQPPHEKL). Over residues 532-558 (KTPPPQAYHPPPPIYHHPPFHPPPHVK) the composition is skewed to pro residues.

This sequence belongs to the nodulin 75 family.

Functionally, involved in early stages of root nodule development. In Medicago truncatula (Barrel medic), this protein is Early nodule-specific protein 2.